A 342-amino-acid polypeptide reads, in one-letter code: Biotin synthase (342 aa).

Residues 38 to 262 (GQVQISTLLS…MMPTSYVRLS (225 aa)) form the Radical SAM core domain. 3 residues coordinate [4Fe-4S] cluster: Cys53, Cys57, and Cys60. 4 residues coordinate [2Fe-2S] cluster: Cys97, Cys128, Cys188, and Arg260.

The protein belongs to the radical SAM superfamily. Biotin synthase family. Homodimer. The cofactor is [4Fe-4S] cluster. [2Fe-2S] cluster is required as a cofactor.

It catalyses the reaction (4R,5S)-dethiobiotin + (sulfur carrier)-SH + 2 reduced [2Fe-2S]-[ferredoxin] + 2 S-adenosyl-L-methionine = (sulfur carrier)-H + biotin + 2 5'-deoxyadenosine + 2 L-methionine + 2 oxidized [2Fe-2S]-[ferredoxin]. Its pathway is cofactor biosynthesis; biotin biosynthesis; biotin from 7,8-diaminononanoate: step 2/2. Catalyzes the conversion of dethiobiotin (DTB) to biotin by the insertion of a sulfur atom into dethiobiotin via a radical-based mechanism. The protein is Biotin synthase of Baumannia cicadellinicola subsp. Homalodisca coagulata.